The following is a 179-amino-acid chain: Interleukin-10 (179 aa).

Positions 1 to 19 (MPSSSALLCCLVFLAGVAA) are cleaved as a signal peptide. 2 disulfide bridges follow: cysteine 31–cysteine 127 and cysteine 81–cysteine 133. Asparagine 135 is a glycosylation site (N-linked (GlcNAc...) asparagine).

Belongs to the IL-10 family. Homodimer. Interacts with IL10RA and IL10RB.

The protein localises to the secreted. In terms of biological role, major immune regulatory cytokine that acts on many cells of the immune system where it has profound anti-inflammatory functions, limiting excessive tissue disruption caused by inflammation. Mechanistically, IL10 binds to its heterotetrameric receptor comprising IL10RA and IL10RB leading to JAK1 and STAT2-mediated phosphorylation of STAT3. In turn, STAT3 translocates to the nucleus where it drives expression of anti-inflammatory mediators. Targets antigen-presenting cells (APCs) such as macrophages and monocytes and inhibits their release of pro-inflammatory cytokines including granulocyte-macrophage colony-stimulating factor /GM-CSF, granulocyte colony-stimulating factor/G-CSF, IL-1 alpha, IL-1 beta, IL-6, IL-8 and TNF-alpha. Also interferes with antigen presentation by reducing the expression of MHC-class II and co-stimulatory molecules, thereby inhibiting their ability to induce T cell activation. In addition, controls the inflammatory response of macrophages by reprogramming essential metabolic pathways including mTOR signaling. The protein is Interleukin-10 (IL10) of Cervus elaphus (Red deer).